Consider the following 228-residue polypeptide: 2-C-methyl-D-erythritol 4-phosphate cytidylyltransferase (228 aa).

Belongs to the IspD/TarI cytidylyltransferase family. IspD subfamily.

The catalysed reaction is 2-C-methyl-D-erythritol 4-phosphate + CTP + H(+) = 4-CDP-2-C-methyl-D-erythritol + diphosphate. Its pathway is isoprenoid biosynthesis; isopentenyl diphosphate biosynthesis via DXP pathway; isopentenyl diphosphate from 1-deoxy-D-xylulose 5-phosphate: step 2/6. In terms of biological role, catalyzes the formation of 4-diphosphocytidyl-2-C-methyl-D-erythritol from CTP and 2-C-methyl-D-erythritol 4-phosphate (MEP). This Dechloromonas aromatica (strain RCB) protein is 2-C-methyl-D-erythritol 4-phosphate cytidylyltransferase.